Here is a 594-residue protein sequence, read N- to C-terminus: Lipolysis-stimulated lipoprotein receptor (594 aa).

The N-terminal stretch at 1-35 (MAPAASACAGAPGSHPATTIFVCLFLIIYCPDRAS) is a signal peptide. Residues 36–206 (AIQVTVPDPY…PGFRAGPLED (171 aa)) lie on the Extracellular side of the membrane. Positions 89–181 (PASVDNQLNA…DLDGNNEAYA (93 aa)) constitute an Ig-like V-type domain. A disulfide bond links Cys113 and Cys165. The chain crosses the membrane as a helical span at residues 207 to 227 (WLFVVVVCLASLLFFLLLGIC). Over 228–594 (WCQCCPHTCC…LALSRESLVV (367 aa)) the chain is Cytoplasmic. Thr283 carries the phosphothreonine modification. Ser308 bears the Phosphoserine; by MAPK8 and MAPK9 mark. A phosphoserine mark is found at Ser314, Ser332, Ser375, and Ser379. The segment covering 375–387 (SEVTSLHEDDWRS) has biased composition (basic and acidic residues). The tract at residues 375-594 (SEVTSLHEDD…LALSRESLVV (220 aa)) is disordered. At Thr396 the chain carries Phosphothreonine. Phosphoserine is present on residues Ser407, Ser410, and Ser436. A compositionally biased stretch (basic and acidic residues) spans 435 to 444 (RSVDALDDIN). The segment covering 445–460 (RPGSTESGRSSPPSSG) has biased composition (low complexity). Ser471 and Ser473 each carry phosphoserine. A compositionally biased stretch (basic and acidic residues) spans 472–550 (RSRDDLYDPD…GAGERRRVYR (79 aa)). Position 478 is a phosphotyrosine (Tyr478). Position 576 is a phosphoserine (Ser576). Lys583 participates in a covalent cross-link: Glycyl lysine isopeptide (Lys-Gly) (interchain with G-Cter in ubiquitin). A phosphoserine mark is found at Ser588 and Ser591.

Belongs to the immunoglobulin superfamily. LISCH7 family. In terms of assembly, homotrimer or homotetramer. Assembles into cell-cell contacts. Interacts (via the cytoplasmic domain) with MARVELD2 (via C-terminal cytoplasmic domain); the interaction is required to recruit MARVELD2 to tricellular contacts. Interacts with OCLN. Phosphorylation at Ser-308 by MAPK8/JNK1 and MAPK9/JNK2 may be required for exclusive localization at tricellular tight junstions. In terms of processing, polyubiquitinated at Lys-583 via 'Lys-63'-linked ubiquitin chains; deubiquitinated by USP53. Expressed in epithelial tissues (at protein level). Specifically expressed in liver and to a lower extent in kidney (at protein level). Also detected in brain, testis, ovaries, adrenal gland, intestine, muscle, and lung. In colon, only expressed in the lower portion of crypts. Expressed in the liver. As to expression, expressed in liver, stomach, small intestine and colon. Also detected in other epithelial tissues.

Its subcellular location is the cell membrane. The protein resides in the cell junction. It localises to the tight junction. In terms of biological role, probable role in the clearance of triglyceride-rich lipoprotein from blood. Binds chylomicrons, LDL and VLDL in presence of free fatty acids and allows their subsequent uptake in the cells. Maintains epithelial barrier function by recruiting MARVELD2/tricellulin to tricellular tight junctions. This chain is Lipolysis-stimulated lipoprotein receptor, found in Mus musculus (Mouse).